Here is a 547-residue protein sequence, read N- to C-terminus: CTP synthase (547 aa).

The interval 1–265 (MARYVFITGG…DQAVLDAFGI (265 aa)) is amidoligase domain. Ser13 is a CTP binding site. Ser13 provides a ligand contact to UTP. Residues 14–19 (SLGKGL) and Asp71 each bind ATP. Mg(2+) is bound by residues Asp71 and Glu139. Residues 146–148 (DIE), 186–191 (KTKPTQ), and Lys222 each bind CTP. UTP is bound by residues 186 to 191 (KTKPTQ) and Lys222. The region spanning 291 to 546 (RVAIVGKYTQ…IRAAVEVSRL (256 aa)) is the Glutamine amidotransferase type-1 domain. Residue Gly353 participates in L-glutamine binding. Cys380 (nucleophile; for glutamine hydrolysis) is an active-site residue. L-glutamine contacts are provided by residues 381–384 (LGMQ), Glu404, and Arg474. Residues His519 and Glu521 contribute to the active site.

Belongs to the CTP synthase family. As to quaternary structure, homotetramer.

It catalyses the reaction UTP + L-glutamine + ATP + H2O = CTP + L-glutamate + ADP + phosphate + 2 H(+). It carries out the reaction L-glutamine + H2O = L-glutamate + NH4(+). The catalysed reaction is UTP + NH4(+) + ATP = CTP + ADP + phosphate + 2 H(+). It functions in the pathway pyrimidine metabolism; CTP biosynthesis via de novo pathway; CTP from UDP: step 2/2. With respect to regulation, allosterically activated by GTP, when glutamine is the substrate; GTP has no effect on the reaction when ammonia is the substrate. The allosteric effector GTP functions by stabilizing the protein conformation that binds the tetrahedral intermediate(s) formed during glutamine hydrolysis. Inhibited by the product CTP, via allosteric rather than competitive inhibition. Its function is as follows. Catalyzes the ATP-dependent amination of UTP to CTP with either L-glutamine or ammonia as the source of nitrogen. Regulates intracellular CTP levels through interactions with the four ribonucleotide triphosphates. The sequence is that of CTP synthase from Cereibacter sphaeroides (strain ATCC 17025 / ATH 2.4.3) (Rhodobacter sphaeroides).